Here is a 381-residue protein sequence, read N- to C-terminus: MYG1 exonuclease (381 aa).

The transit peptide at 1 to 47 (MGRGFLRGVLTLLPLRSVLQVQHCMLVSEPDLPPKRPRNNLMAPPRI) directs the protein to the mitochondrion. An N6-acetyllysine mark is found at Lys267 and Lys273.

This sequence belongs to the MYG1 family.

It is found in the nucleus. Its subcellular location is the nucleoplasm. It localises to the mitochondrion matrix. The protein resides in the nucleolus. 3'-5' RNA exonuclease which cleaves in situ on specific transcripts in both nucleus and mitochondrion. Involved in regulating spatially segregated organellar RNA processing, acts as a coordinator of nucleo-mitochondrial crosstalk. In nucleolus, processes pre-ribosomal RNA involved in ribosome assembly and alters cytoplasmic translation. In mitochondrial matrix, processes 3'-termini of the mito-ribosomal and messenger RNAs and controls translation of mitochondrial proteins. The polypeptide is MYG1 exonuclease (Rattus norvegicus (Rat)).